A 250-amino-acid polypeptide reads, in one-letter code: 4-hydroxy-tetrahydrodipicolinate reductase (250 aa).

Residues glycine 9–methionine 14, glycine 79–threonine 81, and serine 103–methionine 106 contribute to the NAD(+) site. Catalysis depends on histidine 135, which acts as the Proton donor/acceptor. (S)-2,3,4,5-tetrahydrodipicolinate is bound at residue histidine 136. Lysine 139 functions as the Proton donor in the catalytic mechanism. Glycine 145–threonine 146 serves as a coordination point for (S)-2,3,4,5-tetrahydrodipicolinate.

Belongs to the DapB family.

The protein localises to the cytoplasm. The enzyme catalyses (S)-2,3,4,5-tetrahydrodipicolinate + NAD(+) + H2O = (2S,4S)-4-hydroxy-2,3,4,5-tetrahydrodipicolinate + NADH + H(+). It carries out the reaction (S)-2,3,4,5-tetrahydrodipicolinate + NADP(+) + H2O = (2S,4S)-4-hydroxy-2,3,4,5-tetrahydrodipicolinate + NADPH + H(+). It functions in the pathway amino-acid biosynthesis; L-lysine biosynthesis via DAP pathway; (S)-tetrahydrodipicolinate from L-aspartate: step 4/4. Functionally, catalyzes the conversion of 4-hydroxy-tetrahydrodipicolinate (HTPA) to tetrahydrodipicolinate. This Rickettsia bellii (strain OSU 85-389) protein is 4-hydroxy-tetrahydrodipicolinate reductase.